The primary structure comprises 258 residues: Ditrans,polycis-undecaprenyl-diphosphate synthase ((2E,6E)-farnesyl-diphosphate specific) (258 aa).

Asp-24 is a catalytic residue. Residue Asp-24 participates in Mg(2+) binding. Residues 25–28, Trp-29, Arg-37, His-41, and 69–71 each bind substrate; these read GNGR and SSE. Asn-72 serves as the catalytic Proton acceptor. Substrate-binding positions include Trp-73, Arg-75, Arg-192, and 198–200; that span reads RIS. Glu-211 provides a ligand contact to Mg(2+).

Belongs to the UPP synthase family. Homodimer. Mg(2+) is required as a cofactor.

The enzyme catalyses 8 isopentenyl diphosphate + (2E,6E)-farnesyl diphosphate = di-trans,octa-cis-undecaprenyl diphosphate + 8 diphosphate. Functionally, catalyzes the sequential condensation of isopentenyl diphosphate (IPP) with (2E,6E)-farnesyl diphosphate (E,E-FPP) to yield (2Z,6Z,10Z,14Z,18Z,22Z,26Z,30Z,34E,38E)-undecaprenyl diphosphate (di-trans,octa-cis-UPP). UPP is the precursor of glycosyl carrier lipid in the biosynthesis of bacterial cell wall polysaccharide components such as peptidoglycan and lipopolysaccharide. The sequence is that of Ditrans,polycis-undecaprenyl-diphosphate synthase ((2E,6E)-farnesyl-diphosphate specific) from Xanthomonas oryzae pv. oryzae (strain KACC10331 / KXO85).